Consider the following 313-residue polypeptide: Olfactory receptor 2B6 (313 aa).

The Extracellular portion of the chain corresponds to 1–27 (MSWANESITGEFVLLGFSDQPWLEFPL). N-linked (GlcNAc...) asparagine glycosylation occurs at asparagine 5. The helical transmembrane segment at 28–48 (FVVFLTSYIVTIFGNLNIILV) threads the bilayer. The Cytoplasmic segment spans residues 49-57 (SHLDPKLHT). Residues 58-78 (PMYFFLTNLSVIDLCYITCTV) form a helical membrane-spanning segment. Residues 79–97 (PQMLVNLRSIRKVISFGGC) are Extracellular-facing. A disulfide bridge links cysteine 97 with cysteine 189. The chain crosses the membrane as a helical span at residues 98–118 (VVQLFMFLALGATECVLLPVM). At 119–143 (SFDRFVAICRPLHYSVIMHQRLCLQ) the chain is on the cytoplasmic side. The chain crosses the membrane as a helical span at residues 144 to 164 (LAAVSWIIGFGNSVWLSILTL). The Extracellular portion of the chain corresponds to 165–200 (QLPRCGHYVIDHFLCEVPALLKLSCVDVTANEAELF). Residues 201–221 (FVSVFFHLTPLSLILTSYAFI) form a helical membrane-spanning segment. Topologically, residues 222 to 244 (ARAILKIQSAEGRQKAFGTCSSH) are cytoplasmic. The helical transmembrane segment at 245-265 (LIVVSLFYGTALSVYFLPPSP) threads the bilayer. Residues 266–271 (HSKNRR) are Extracellular-facing. A helical membrane pass occupies residues 272 to 292 (KMVPLFYGIIAPMLNPLIYTL). The Cytoplasmic segment spans residues 293 to 313 (RNKEVKDAFKRLIKRVFLSKN).

The protein belongs to the G-protein coupled receptor 1 family.

The protein localises to the cell membrane. Odorant receptor. The protein is Olfactory receptor 2B6 of Mus musculus (Mouse).